Consider the following 398-residue polypeptide: G2/mitotic-specific cyclin-B2 (398 aa).

Thr8 bears the Phosphothreonine mark. Residues Ser11, Ser77, and Ser92 each carry the phosphoserine modification. Position 94 is a phosphothreonine (Thr94). Residues Ser99, Ser392, and Ser398 each carry the phosphoserine modification.

This sequence belongs to the cyclin family. Cyclin AB subfamily. In terms of assembly, interacts with the CDK1 protein kinase to form a serine/threonine kinase holoenzyme complex also known as maturation promoting factor (MPF). The cyclin subunit imparts substrate specificity to the complex.

Essential for the control of the cell cycle at the G2/M (mitosis) transition. This is G2/mitotic-specific cyclin-B2 (CCNB2) from Macaca fascicularis (Crab-eating macaque).